Consider the following 437-residue polypeptide: Adenosylmethionine-8-amino-7-oxononanoate aminotransferase (437 aa).

Tryptophan 64 is a substrate binding site. 124–125 serves as a coordination point for pyridoxal 5'-phosphate; sequence GS. Position 157 (tyrosine 157) interacts with substrate. Aspartate 254 lines the pyridoxal 5'-phosphate pocket. Residues lysine 283 and glycine 316 each contribute to the substrate site. Position 283 is an N6-(pyridoxal phosphate)lysine (lysine 283). 317–318 contributes to the pyridoxal 5'-phosphate binding site; sequence PT. Arginine 400 contacts substrate.

The protein belongs to the class-III pyridoxal-phosphate-dependent aminotransferase family. BioA subfamily. As to quaternary structure, homodimer. Pyridoxal 5'-phosphate serves as cofactor.

Its subcellular location is the cytoplasm. The enzyme catalyses (8S)-8-amino-7-oxononanoate + S-adenosyl-L-methionine = S-adenosyl-4-methylsulfanyl-2-oxobutanoate + (7R,8S)-7,8-diammoniononanoate. It participates in cofactor biosynthesis; biotin biosynthesis; 7,8-diaminononanoate from 8-amino-7-oxononanoate (SAM route): step 1/1. Functionally, catalyzes the transfer of the alpha-amino group from S-adenosyl-L-methionine (SAM) to 7-keto-8-aminopelargonic acid (KAPA) to form 7,8-diaminopelargonic acid (DAPA). It is the only aminotransferase known to utilize SAM as an amino donor. In Mycobacterium tuberculosis (strain CDC 1551 / Oshkosh), this protein is Adenosylmethionine-8-amino-7-oxononanoate aminotransferase (bioA).